The chain runs to 202 residues: Peptidyl-tRNA hydrolase (202 aa).

Residue tyrosine 19 participates in tRNA binding. Catalysis depends on histidine 24, which acts as the Proton acceptor. Tyrosine 70, asparagine 72, and asparagine 118 together coordinate tRNA.

Belongs to the PTH family. As to quaternary structure, monomer.

It is found in the cytoplasm. The catalysed reaction is an N-acyl-L-alpha-aminoacyl-tRNA + H2O = an N-acyl-L-amino acid + a tRNA + H(+). In terms of biological role, hydrolyzes ribosome-free peptidyl-tRNAs (with 1 or more amino acids incorporated), which drop off the ribosome during protein synthesis, or as a result of ribosome stalling. Catalyzes the release of premature peptidyl moieties from peptidyl-tRNA molecules trapped in stalled 50S ribosomal subunits, and thus maintains levels of free tRNAs and 50S ribosomes. This is Peptidyl-tRNA hydrolase from Prochlorococcus marinus (strain NATL2A).